We begin with the raw amino-acid sequence, 440 residues long: 26S proteasome regulatory subunit 4 (440 aa).

Positions 1 to 13 (MGQSQSGGHGPGG) are enriched in gly residues. Residues 1-49 (MGQSQSGGHGPGGGKKDDKDKKKKYEPPVPTRVGKKKKKTKGPDAASKL) are disordered. Glycine 2 carries N-myristoyl glycine lipidation. Residue serine 4 is modified to Phosphoserine. Positions 14-26 (GKKDDKDKKKKYE) are enriched in basic and acidic residues. Threonine 53 is subject to Phosphothreonine. Residues 84-104 (QMKPLEEKQEEERSKVDDLRG) are disordered. The span at 86–103 (KPLEEKQEEERSKVDDLR) shows a compositional bias: basic and acidic residues. ATP is bound at residue 226-233 (GPPGTGKT). Lysine 237 participates in a covalent cross-link: Glycyl lysine isopeptide (Lys-Gly) (interchain with G-Cter in ubiquitin). Position 258 is an N6-acetyllysine (lysine 258). The residue at position 434 (threonine 434) is a Phosphothreonine. Tyrosine 439 is subject to Phosphotyrosine.

The protein belongs to the AAA ATPase family. Component of the 19S proteasome regulatory particle complex. The 26S proteasome consists of a 20S core particle (CP) and two 19S regulatory subunits (RP). The regulatory particle is made of a lid composed of 9 subunits, a base containing 6 ATPases including PSMC1 and few additional components. Interacts with SCA7. Interacts with NGLY1. Interacts with PAAF1.

The protein resides in the cytoplasm. It localises to the nucleus. The protein localises to the membrane. Its function is as follows. Component of the 26S proteasome, a multiprotein complex involved in the ATP-dependent degradation of ubiquitinated proteins. This complex plays a key role in the maintenance of protein homeostasis by removing misfolded or damaged proteins, which could impair cellular functions, and by removing proteins whose functions are no longer required. Therefore, the proteasome participates in numerous cellular processes, including cell cycle progression, apoptosis, or DNA damage repair. PSMC1 belongs to the heterohexameric ring of AAA (ATPases associated with diverse cellular activities) proteins that unfolds ubiquitinated target proteins that are concurrently translocated into a proteolytic chamber and degraded into peptides. The protein is 26S proteasome regulatory subunit 4 (PSMC1) of Homo sapiens (Human).